The following is a 362-amino-acid chain: Sulfoquinovose monooxygenase (362 aa).

It belongs to the SsuD family.

The catalysed reaction is 6-sulfo-D-quinovose + FMNH2 + O2 = 6-dehydro-D-glucose + FMN + sulfite + H2O + 2 H(+). Functionally, part of the alkanesulfonate monooxygenase (sulfo-ASMO) pathway, a D-sulfoquinovose degradation pathway that enables the complete utilization of all carbons within sulfoquinovose (SQ) with concomitant production of inorganic sulfite. Catalyzes the oxidative desulfurization of sulfoquinovose to sulfite and 6-dehydro-D-glucose. In Novosphingobium aromaticivorans (strain ATCC 700278 / DSM 12444 / CCUG 56034 / CIP 105152 / NBRC 16084 / F199), this protein is Sulfoquinovose monooxygenase.